The following is a 584-amino-acid chain: Protein FAM117B (584 aa).

The interval 1–214 (MSQRVRRNGS…SSSSSIIRRT (214 aa)) is disordered. Residue Ser-10 is modified to Phosphoserine. The span at 53-79 (TRGGGGGGNNGGNGGASGPSGGGGSGG) shows a compositional bias: gly residues. Positions 80-90 (PRTASRSTSPT) are enriched in low complexity. Position 102 is a phosphoserine (Ser-102). The span at 114-132 (TSTRGTSPTRGTAPGARSS) shows a compositional bias: low complexity. A compositionally biased stretch (pro residues) spans 133–142 (PPRPQPPPPL). Residues 145-154 (TVSSPSSSPT) show a composition bias toward polar residues. The segment covering 204 to 214 (SSSSSSIIRRT) has biased composition (low complexity). A phosphoserine mark is found at Ser-206, Ser-215, Ser-216, and Ser-268. Disordered regions lie at residues 227–461 (GHWP…SYMF) and 551–584 (STNTEQERVSRGTSTVLPSASLHAPPEPIEEAEG). Residues 287–297 (RSKHSSRHHRD) are compositionally biased toward basic residues. Ser-340 is subject to Phosphoserine. A compositionally biased stretch (basic and acidic residues) spans 350–361 (IIIKETGEKEEQ). Polar residues predominate over residues 379–392 (QRSSSTRSIDTQTP). Phosphoserine is present on Ser-386. Positions 399–412 (SNNSSRSQSVSPTS) are enriched in low complexity. Ser-444 and Ser-452 each carry phosphoserine.

The chain is Protein FAM117B (Fam117b) from Mus musculus (Mouse).